A 917-amino-acid chain; its full sequence is MSAPRIWLAQALLFFLTTESIGQLLEPCGYIYPEFPVVQRGSNFTAICVLKEACLQHYYVNASYIVWKTNHAAVPREQVTVINRTTSSVTFTDVVLPSVQLTCNILSFGQIEQNVYGVTMLSGFPPDKPTNLTCIVNEGKNMLCQWDPGRETYLETNYTLKSEWATEKFPDCQSKHGTSCMVSYMPTYYVNIEVWVEAENALGKVSSESINFDPVDKVKPTPPYNLSVTNSEELSSILKLSWVSSGLGGLLDLKSDIQYRTKDASTWIQVPLEDTMSPRTSFTVQDLKPFTEYVFRIRSIKDSGKGYWSDWSEEASGTTYEDRPSRPPSFWYKTNPSHGQEYRSVRLIWKALPLSEANGKILDYEVILTQSKSVSQTYTVTGTELTVNLTNDRYVASLAARNKVGKSAAAVLTIPSPHVTAAYSVVNLKAFPKDNLLWVEWTPPPKPVSKYILEWCVLSENAPCVEDWQQEDATVNRTHLRGRLLESKCYQITVTPVFATGPGGSESLKAYLKQAAPARGPTVRTKKVGKNEAVLAWDQIPVDDQNGFIRNYSISYRTSVGKEMVVHVDSSHTEYTLSSLSSDTLYMVRMAAYTDEGGKDGPEFTFTTPKFAQGEIEAIVVPVCLAFLLTTLLGVLFCFNKRDLIKKHIWPNVPDPSKSHIAQWSPHTPPRHNFNSKDQMYSDGNFTDVSVVEIEANNKKPCPDDLKSVDLFKKEKVSTEGHSSGIGGSSCMSSSRPSISSNEENESAQSTASTVQYSTVVHSGYRHQVPSVQVFSRSESTQPLLDSEERPEDLQLVDSVDGGDEILPRQPYFKQNCSQPEACPEISHFERSNQVLSGNEEDFVRLKQQQVSDHISQPYGSEQRRLFQEGSTADALGTGADGQMERFESVGMETTIDEEIPKSYLPQTVRQGGYMPQ.

Positions 1–22 (MSAPRIWLAQALLFFLTTESIG) are cleaved as a signal peptide. Residues 23–617 (QLLEPCGYIY…TPKFAQGEIE (595 aa)) lie on the Extracellular side of the membrane. In terms of domain architecture, Ig-like C2-type spans 26–120 (EPCGYIYPEF…IEQNVYGVTM (95 aa)). 2 disulfides stabilise this stretch: C28–C54 and C48–C103. N-linked (GlcNAc...) asparagine glycosylation is found at N43, N61, N83, and N131. Fibronectin type-III domains are found at residues 128-221 (KPTN…VKPT), 222-322 (PPYN…TYED), 327-417 (PPSF…IPSP), 422-515 (AYSV…LKQA), and 517-611 (PARG…TPKF). Residues C134 and C144 are joined by a disulfide bond. A glycan (N-linked (GlcNAc...) asparagine) is linked at N157. Cysteines 172 and 180 form a disulfide. Residue N225 is glycosylated (N-linked (GlcNAc...) asparagine). Residues 308-312 (WSDWS) carry the WSXWS motif motif. A glycan (N-linked (GlcNAc...) asparagine) is linked at N388. A disulfide bond links C456 and C464. N476 and N551 each carry an N-linked (GlcNAc...) asparagine glycan. The chain crosses the membrane as a helical span at residues 618-639 (AIVVPVCLAFLLTTLLGVLFCF). The Cytoplasmic segment spans residues 640–917 (NKRDLIKKHI…TVRQGGYMPQ (278 aa)). Residues 649 to 657 (IWPNVPDPS) carry the Box 1 motif motif. 2 disordered regions span residues 658–678 (KSHIAQWSPHTPPRHNFNSKD) and 719–754 (TEGHSSGIGGSSCMSSSRPSISSNEENESAQSTAST). Phosphoserine is present on residues S659 and S665. Over residues 729–753 (SSCMSSSRPSISSNEENESAQSTAS) the composition is skewed to low complexity. Phosphoserine occurs at positions 780, 787, 827, and 837. The tract at residues 898-917 (EEIPKSYLPQTVRQGGYMPQ) is disordered.

It belongs to the type I cytokine receptor family. Type 2 subfamily. As to quaternary structure, component of a hexamer of two molecules each of IL6, IL6R and IL6ST; associates with the complex IL6:IL6R but does not interact with IL6. Forms heterodimers composed of LIFR and IL6ST (type I OSM receptor) which are activated by LIF and OSM. Also forms heterodimers composed of OSMR and IL6ST (type II receptor) which are activated by OSM but not by LIF. Interacts with HCK. Interacts with INPP5D/SHIP1. Interacts with SRC and YES. Interacts with ARMH4; this interaction prevents IL6ST protein homodimerization and bridges ARMH4 with IL6R and STAT3 and therefore inhibits phosphorylation of STAT3 at 'Tyr-705'. In terms of processing, phosphorylation of Ser-780 down-regulates cell surface expression. Heavily N-glycosylated. Glycosylation is required for protein stability and localization in plasma membrane but not for ligand binding. As to expression, expression not restricted to IL6-responsive cells. Found in tissues such as brain, heart, thymus, spleen, kidney, lung and liver. Found in all the cell lines tested except BaF-B03. Expressed paraventricular nucleus of the hypothalamus.

It is found in the cell membrane. Its function is as follows. Signal-transducing molecule. The receptor systems for IL6, LIF, OSM, CNTF, IL11, CTF1 and BSF3 can utilize IL6ST for initiating signal transmission. Binding of IL6 to IL6R induces IL6ST homodimerization and formation of a high-affinity receptor complex, which activates the intracellular JAK-MAPK and JAK-STAT3 signaling pathways. That causes phosphorylation of IL6ST tyrosine residues which in turn activates STAT3. In parallel, the IL6 signaling pathway induces the expression of two cytokine receptor signaling inhibitors, SOCS1 and SOCS3, which inhibit JAK and terminate the activity of the IL6 signaling pathway as a negative feedback loop. Also activates the yes-associated protein 1 (YAP) and NOTCH pathways to control inflammation-induced epithelial regeneration, independently of STAT3. Mediates signals which regulate immune response, hematopoiesis, pain control and bone metabolism. Has a role in embryonic development. Essential for survival of motor and sensory neurons and for differentiation of astrocytes. Required for expression of TRPA1 in nociceptive neurons. Required for the maintenance of PTH1R expression in the osteoblast lineage and for the stimulation of PTH-induced osteoblast differentiation. Required for normal trabecular bone mass and cortical bone composition. In Mus musculus (Mouse), this protein is Interleukin-6 receptor subunit beta.